A 286-amino-acid polypeptide reads, in one-letter code: tRNA dimethylallyltransferase (286 aa).

Positions 18-21 (DSMQ) are interaction with substrate tRNA.

Belongs to the IPP transferase family. In terms of assembly, monomer. Requires Mg(2+) as cofactor.

It catalyses the reaction adenosine(37) in tRNA + dimethylallyl diphosphate = N(6)-dimethylallyladenosine(37) in tRNA + diphosphate. Functionally, catalyzes the transfer of a dimethylallyl group onto the adenine at position 37 in tRNAs that read codons beginning with uridine, leading to the formation of N6-(dimethylallyl)adenosine (i(6)A). The protein is tRNA dimethylallyltransferase of Tropheryma whipplei (strain TW08/27) (Whipple's bacillus).